Here is a 265-residue protein sequence, read N- to C-terminus: Shikimate dehydrogenase (NADP(+)) (265 aa).

Residues 15-17 and threonine 62 contribute to the shikimate site; that span reads SLS. Catalysis depends on lysine 66, which acts as the Proton acceptor. Shikimate contacts are provided by asparagine 87 and aspartate 102. NADP(+) is bound by residues 125-129, 149-154, and leucine 209; these read GAGGA and NRTLEK. Shikimate is bound at residue tyrosine 211. Glycine 233 lines the NADP(+) pocket.

The protein belongs to the shikimate dehydrogenase family. As to quaternary structure, homodimer.

The catalysed reaction is shikimate + NADP(+) = 3-dehydroshikimate + NADPH + H(+). It functions in the pathway metabolic intermediate biosynthesis; chorismate biosynthesis; chorismate from D-erythrose 4-phosphate and phosphoenolpyruvate: step 4/7. Involved in the biosynthesis of the chorismate, which leads to the biosynthesis of aromatic amino acids. Catalyzes the reversible NADPH linked reduction of 3-dehydroshikimate (DHSA) to yield shikimate (SA). The chain is Shikimate dehydrogenase (NADP(+)) from Legionella pneumophila subsp. pneumophila (strain Philadelphia 1 / ATCC 33152 / DSM 7513).